The following is a 611-amino-acid chain: Dihydroxy-acid dehydratase (611 aa).

D81 is a Mg(2+) binding site. Residue C122 participates in [2Fe-2S] cluster binding. Mg(2+)-binding residues include D123 and K124. Position 124 is an N6-carboxylysine (K124). C195 contributes to the [2Fe-2S] cluster binding site. Mg(2+) is bound at residue E491. S517 (proton acceptor) is an active-site residue.

Belongs to the IlvD/Edd family. Homodimer. Requires [2Fe-2S] cluster as cofactor. The cofactor is Mg(2+).

It catalyses the reaction (2R)-2,3-dihydroxy-3-methylbutanoate = 3-methyl-2-oxobutanoate + H2O. It carries out the reaction (2R,3R)-2,3-dihydroxy-3-methylpentanoate = (S)-3-methyl-2-oxopentanoate + H2O. It participates in amino-acid biosynthesis; L-isoleucine biosynthesis; L-isoleucine from 2-oxobutanoate: step 3/4. The protein operates within amino-acid biosynthesis; L-valine biosynthesis; L-valine from pyruvate: step 3/4. In terms of biological role, functions in the biosynthesis of branched-chain amino acids. Catalyzes the dehydration of (2R,3R)-2,3-dihydroxy-3-methylpentanoate (2,3-dihydroxy-3-methylvalerate) into 2-oxo-3-methylpentanoate (2-oxo-3-methylvalerate) and of (2R)-2,3-dihydroxy-3-methylbutanoate (2,3-dihydroxyisovalerate) into 2-oxo-3-methylbutanoate (2-oxoisovalerate), the penultimate precursor to L-isoleucine and L-valine, respectively. The chain is Dihydroxy-acid dehydratase from Allorhizobium ampelinum (strain ATCC BAA-846 / DSM 112012 / S4) (Agrobacterium vitis (strain S4)).